The primary structure comprises 890 residues: Nitrate reductase [NADH] 2 (890 aa).

Cysteine 165 is a binding site for Mo-molybdopterin. The 76-residue stretch at 513 to 588 (SKMFSVSEVK…LEDYRIGELI (76 aa)) folds into the Cytochrome b5 heme-binding domain. Residues histidine 548 and histidine 571 each contribute to the heme site. The FAD-binding FR-type domain occupies 634–746 (RQKIPCKLVS…KGPLGHIEYT (113 aa)). Residues 686 to 689 (RAYT), 703 to 707 (LIKVY), phenylalanine 708, phenylalanine 715, 720 to 722 (LMS), and threonine 773 each bind FAD.

This sequence belongs to the nitrate reductase family. In terms of assembly, homodimer. It depends on FAD as a cofactor. Heme is required as a cofactor. The cofactor is Mo-molybdopterin.

It carries out the reaction nitrite + NAD(+) + H2O = nitrate + NADH + H(+). Functionally, nitrate reductase is a key enzyme involved in the first step of nitrate assimilation in plants, fungi and bacteria. The protein is Nitrate reductase [NADH] 2 (NIA2) of Phaseolus vulgaris (Kidney bean).